The primary structure comprises 353 residues: UPF0283 membrane protein YcjF (353 aa).

Positions 1-19 are enriched in basic and acidic residues; sequence MSEPLKPRIDFAEPLKEEP. The interval 1–35 is disordered; that stretch reads MSEPLKPRIDFAEPLKEEPTSAFKAQQTFSEAESR. 3 helical membrane passes run 70–90, 100–120, and 213–233; these read MVMGGLALFGASVVGQGVQWT, VALGGCAAGALIIGAGVGSVV, and ESTLMIAVSSLALVDMAFIAW.

This sequence belongs to the UPF0283 family.

It localises to the cell inner membrane. The polypeptide is UPF0283 membrane protein YcjF (Salmonella enteritidis PT4 (strain P125109)).